A 272-amino-acid polypeptide reads, in one-letter code: 1,4-dihydroxy-2-naphthoyl-CoA synthase (272 aa).

Residues arginine 33, 72–76 (SGGDQ), tyrosine 84, 116–120 (YAIGG), threonine 142, serine 148, tyrosine 245, and lysine 260 each bind substrate. Hydrogencarbonate is bound at residue 141–143 (QTG). The span at 253-264 (GRDAFKEKRDPD) shows a compositional bias: basic and acidic residues. Positions 253–272 (GRDAFKEKRDPDFDQFPKFP) are disordered.

Belongs to the enoyl-CoA hydratase/isomerase family. MenB subfamily. Hydrogencarbonate is required as a cofactor.

It carries out the reaction 2-succinylbenzoyl-CoA + H(+) = 1,4-dihydroxy-2-naphthoyl-CoA + H2O. It participates in quinol/quinone metabolism; 1,4-dihydroxy-2-naphthoate biosynthesis; 1,4-dihydroxy-2-naphthoate from chorismate: step 6/7. The protein operates within quinol/quinone metabolism; menaquinone biosynthesis. Converts o-succinylbenzoyl-CoA (OSB-CoA) to 1,4-dihydroxy-2-naphthoyl-CoA (DHNA-CoA). This Staphylococcus saprophyticus subsp. saprophyticus (strain ATCC 15305 / DSM 20229 / NCIMB 8711 / NCTC 7292 / S-41) protein is 1,4-dihydroxy-2-naphthoyl-CoA synthase.